The chain runs to 251 residues: DNA repair protein RecO (251 aa).

The protein belongs to the RecO family.

In terms of biological role, involved in DNA repair and RecF pathway recombination. The polypeptide is DNA repair protein RecO (Acidiphilium cryptum (strain JF-5)).